Here is a 348-residue protein sequence, read N- to C-terminus: Probable dual-specificity RNA methyltransferase RlmN (348 aa).

Residue Glu93 is the Proton acceptor of the active site. The Radical SAM core domain maps to 99–333 (TEKRLTACLS…VSFRKSRGLD (235 aa)). The cysteines at positions 106 and 338 are disulfide-linked. Residues Cys113, Cys117, and Cys120 each coordinate [4Fe-4S] cluster. S-adenosyl-L-methionine is bound by residues 160–161 (GE), Ser190, 219–221 (SLH), and Asn295. Cys338 functions as the S-methylcysteine intermediate in the catalytic mechanism.

The protein belongs to the radical SAM superfamily. RlmN family. The cofactor is [4Fe-4S] cluster.

It is found in the cytoplasm. The catalysed reaction is adenosine(2503) in 23S rRNA + 2 reduced [2Fe-2S]-[ferredoxin] + 2 S-adenosyl-L-methionine = 2-methyladenosine(2503) in 23S rRNA + 5'-deoxyadenosine + L-methionine + 2 oxidized [2Fe-2S]-[ferredoxin] + S-adenosyl-L-homocysteine. It catalyses the reaction adenosine(37) in tRNA + 2 reduced [2Fe-2S]-[ferredoxin] + 2 S-adenosyl-L-methionine = 2-methyladenosine(37) in tRNA + 5'-deoxyadenosine + L-methionine + 2 oxidized [2Fe-2S]-[ferredoxin] + S-adenosyl-L-homocysteine. Its function is as follows. Specifically methylates position 2 of adenine 2503 in 23S rRNA and position 2 of adenine 37 in tRNAs. The sequence is that of Probable dual-specificity RNA methyltransferase RlmN from Prochlorococcus marinus (strain MIT 9312).